Reading from the N-terminus, the 526-residue chain is Glutamyl-tRNA(Gln) amidotransferase subunit A, mitochondrial (526 aa).

Lys76 acts as the Charge relay system in catalysis. The segment at 147–166 (QYREKRKQNSHSENEDSNWL) is disordered. Ser171 acts as the Charge relay system in catalysis. Residue Ser195 is the Acyl-ester intermediate of the active site.

The protein belongs to the amidase family. GatA subfamily. As to quaternary structure, subunit of the heterotrimeric GatCAB amidotransferase (AdT) complex, composed of A (QRSL1), B (GATB) and C (GATC) subunits.

The protein resides in the mitochondrion. The enzyme catalyses L-glutamyl-tRNA(Gln) + L-glutamine + ATP + H2O = L-glutaminyl-tRNA(Gln) + L-glutamate + ADP + phosphate + H(+). Functionally, allows the formation of correctly charged Gln-tRNA(Gln) through the transamidation of misacylated Glu-tRNA(Gln) in the mitochondria. The reaction takes place in the presence of glutamine and ATP through an activated gamma-phospho-Glu-tRNA(Gln). This Bos taurus (Bovine) protein is Glutamyl-tRNA(Gln) amidotransferase subunit A, mitochondrial.